Consider the following 5154-residue polypeptide: Hydrocephalus-inducing protein (5154 aa).

The interval 409 to 800 (MILEDSVLDP…VLLSSPSPCG (392 aa)) is interaction with KIF9. Over residues 997 to 1009 (RPKEKQSKKEPGK) the composition is skewed to basic and acidic residues. Disordered stretches follow at residues 997 to 1033 (RPKEKQSKKEPGKKGSTSSSRRQSKASQEPTDNGNPV), 1966 to 1988 (ENEEEEMNTSDQGTTSTKRTSIS), 2193 to 2222 (ADSHFTGSQKQHHQHQSETPQVQISSSPLL), 2383 to 2423 (KLQQ…QGAT), 2521 to 2572 (HTGT…KAER), and 2706 to 2762 (KAQE…DIDQ). The segment covering 1010–1024 (KGSTSSSRRQSKASQ) has biased composition (low complexity). Positions 1948-1977 (EMKKSKEEHMKAKYMENLENEEEEMNTSDQ) form a coiled coil. Polar residues-rich tracts occupy residues 1974–1988 (TSDQGTTSTKRTSIS) and 2209–2220 (SETPQVQISSSP). Residues 2308 to 2444 (YVVMKAQEKA…LKMESIERKV (137 aa)) adopt a coiled-coil conformation. Composition is skewed to basic and acidic residues over residues 2383–2398 (KLQQELERQKEEDELK), 2523–2535 (GTDEMSHEADDQR), 2548–2572 (KDRERERLEKERAEKERLEREKAER), and 2721–2734 (KLKDKPEQVRETQK). Residues 2543 to 2588 (GRKGRKDRERERLEKERAEKERLEREKAERERLEKLKALEERSDVE) adopt a coiled-coil conformation.

In terms of assembly, interacts with KIF9. Expressed in brain and testis. Expressed in ciliated epithelial cells lining bronchi and oviduct, and in spermatocytes.

It localises to the cell projection. The protein localises to the cilium. It is found in the cytoplasm. Its subcellular location is the cytoskeleton. The protein resides in the cilium axoneme. It localises to the flagellum. In terms of biological role, required for ciliary motility. This Mus musculus (Mouse) protein is Hydrocephalus-inducing protein (Hydin).